Consider the following 155-residue polypeptide: Small ribosomal subunit protein uS7 (155 aa).

This sequence belongs to the universal ribosomal protein uS7 family. As to quaternary structure, part of the 30S ribosomal subunit. Contacts proteins S9 and S11.

Functionally, one of the primary rRNA binding proteins, it binds directly to 16S rRNA where it nucleates assembly of the head domain of the 30S subunit. Is located at the subunit interface close to the decoding center, probably blocks exit of the E-site tRNA. This is Small ribosomal subunit protein uS7 from Xanthomonas oryzae pv. oryzae (strain MAFF 311018).